A 382-amino-acid chain; its full sequence is Queuine tRNA-ribosyltransferase (382 aa).

Aspartate 93 functions as the Proton acceptor in the catalytic mechanism. Residues 93-97, aspartate 147, glutamine 191, and glycine 218 contribute to the substrate site; that span reads DSGGF. Residues 249-255 form an RNA binding region; sequence GVGKPED. Aspartate 268 acts as the Nucleophile in catalysis. The RNA binding; important for wobble base 34 recognition stretch occupies residues 273–277; sequence TRNAR. Residues cysteine 306, cysteine 308, cysteine 311, and histidine 337 each coordinate Zn(2+).

This sequence belongs to the queuine tRNA-ribosyltransferase family. As to quaternary structure, homodimer. Within each dimer, one monomer is responsible for RNA recognition and catalysis, while the other monomer binds to the replacement base PreQ1. Zn(2+) is required as a cofactor.

The catalysed reaction is 7-aminomethyl-7-carbaguanine + guanosine(34) in tRNA = 7-aminomethyl-7-carbaguanosine(34) in tRNA + guanine. It functions in the pathway tRNA modification; tRNA-queuosine biosynthesis. Its function is as follows. Catalyzes the base-exchange of a guanine (G) residue with the queuine precursor 7-aminomethyl-7-deazaguanine (PreQ1) at position 34 (anticodon wobble position) in tRNAs with GU(N) anticodons (tRNA-Asp, -Asn, -His and -Tyr). Catalysis occurs through a double-displacement mechanism. The nucleophile active site attacks the C1' of nucleotide 34 to detach the guanine base from the RNA, forming a covalent enzyme-RNA intermediate. The proton acceptor active site deprotonates the incoming PreQ1, allowing a nucleophilic attack on the C1' of the ribose to form the product. After dissociation, two additional enzymatic reactions on the tRNA convert PreQ1 to queuine (Q), resulting in the hypermodified nucleoside queuosine (7-(((4,5-cis-dihydroxy-2-cyclopenten-1-yl)amino)methyl)-7-deazaguanosine). The sequence is that of Queuine tRNA-ribosyltransferase from Actinobacillus pleuropneumoniae serotype 3 (strain JL03).